The sequence spans 203 residues: Putative 3-methyladenine DNA glycosylase (203 aa).

Belongs to the DNA glycosylase MPG family.

The sequence is that of Putative 3-methyladenine DNA glycosylase from Staphylococcus saprophyticus subsp. saprophyticus (strain ATCC 15305 / DSM 20229 / NCIMB 8711 / NCTC 7292 / S-41).